Here is a 531-residue protein sequence, read N- to C-terminus: MSQEILDQVRRRRTFAIISHPDAGKTTLTEKLLLFSGAIQSAGTVKGKKTGKFATSDWMDIEKQRGISVASSVMQFDYKDHTVNLLDTPGHQDFSEDTYRVLTAVDSALMVIDAAKGVEAQTIKLLNVCRLRDTPIVTFMNKYDREVRDSLELLDEVEDILQIRCAPVTWPIGMGKNFKGVYHILNDEIYLFEAGGERLPHEFGIIKGINNPELEQRFPLEIQQLRDEIELVQAASNEFNLDEFLAGELTPVFFGSAINNFGIQEILNSLIDWAPAPKPRDATMRMVGPDEPKFSGFIFKIQANMDPKHRDRIAFLRVCSGKFERGMKMKHLRINREIAASSVVTFMSHNRELAEEAYAGDIIGIPNHGNIQIGDSFSEGEQLAFTGIPFFAPELFRSVRIKNPLKIKQLQKGLQQLGEEGAVQVFKPMSGADLILGAVGVLQFEVVTSRLANEYGVEAVFDSASIWSARWVSCDDKKKLAEFEKANAGNLAIDAGGNLAYLAPNRVNLGLTQERWPDIVFHETREHSVKL.

The 269-residue stretch at 10–278 (RRRRTFAIIS…SLIDWAPAPK (269 aa)) folds into the tr-type G domain. GTP contacts are provided by residues 19 to 26 (SHPDAGKT), 87 to 91 (DTPGH), and 141 to 144 (NKYD).

This sequence belongs to the TRAFAC class translation factor GTPase superfamily. Classic translation factor GTPase family. PrfC subfamily.

Its subcellular location is the cytoplasm. Its function is as follows. Increases the formation of ribosomal termination complexes and stimulates activities of RF-1 and RF-2. It binds guanine nucleotides and has strong preference for UGA stop codons. It may interact directly with the ribosome. The stimulation of RF-1 and RF-2 is significantly reduced by GTP and GDP, but not by GMP. This chain is Peptide chain release factor 3, found in Neisseria gonorrhoeae (strain NCCP11945).